Here is a 206-residue protein sequence, read N- to C-terminus: High frequency lysogenization protein HflD homolog (206 aa).

Belongs to the HflD family.

The protein localises to the cytoplasm. It is found in the cell inner membrane. The chain is High frequency lysogenization protein HflD homolog from Pseudomonas syringae pv. tomato (strain ATCC BAA-871 / DC3000).